The primary structure comprises 249 residues: tRNA pseudouridine synthase A (249 aa).

Aspartate 52 acts as the Nucleophile in catalysis. Tyrosine 111 is a binding site for substrate.

It belongs to the tRNA pseudouridine synthase TruA family. Homodimer.

It carries out the reaction uridine(38/39/40) in tRNA = pseudouridine(38/39/40) in tRNA. Functionally, formation of pseudouridine at positions 38, 39 and 40 in the anticodon stem and loop of transfer RNAs. This is tRNA pseudouridine synthase A from Maricaulis maris (strain MCS10) (Caulobacter maris).